The primary structure comprises 138 residues: uncharacterized protein (138 aa).

Residues proline 84–glycine 104 form a disordered region. Residues proline 85–proline 98 are compositionally biased toward low complexity.

It to M.pneumoniae MPN_413 and MPN_463.

This is an uncharacterized protein from Mycoplasma pneumoniae (strain ATCC 29342 / M129 / Subtype 1) (Mycoplasmoides pneumoniae).